Consider the following 277-residue polypeptide: Glycerol-3-phosphate acyltransferase (277 aa).

5 helical membrane-spanning segments follow: residues 3 to 23, 55 to 75, 79 to 99, 111 to 131, and 155 to 175; these read LFIF…AIIV, IMVM…AKFL, PVTV…PVFF, IGAL…TWLL, and LILV…ILVL. The segment at 207–277 is disordered; the sequence is SPATSAEQEF…PKTKTVKEKE (71 aa). The span at 216 to 239 shows a compositional bias: basic and acidic residues; that stretch reads FPGKEVIDTNIDETEKTEQAEAVK. Composition is skewed to basic residues over residues 240–253 and 262–271; these read KPKV…AKKT and KPKSTKPKTK.

It belongs to the PlsY family. In terms of assembly, probably interacts with PlsX.

The protein localises to the cell inner membrane. The catalysed reaction is an acyl phosphate + sn-glycerol 3-phosphate = a 1-acyl-sn-glycero-3-phosphate + phosphate. It participates in lipid metabolism; phospholipid metabolism. Catalyzes the transfer of an acyl group from acyl-phosphate (acyl-PO(4)) to glycerol-3-phosphate (G3P) to form lysophosphatidic acid (LPA). This enzyme utilizes acyl-phosphate as fatty acyl donor, but not acyl-CoA or acyl-ACP. This chain is Glycerol-3-phosphate acyltransferase, found in Legionella pneumophila subsp. pneumophila (strain Philadelphia 1 / ATCC 33152 / DSM 7513).